The sequence spans 146 residues: MQGLSFTSTAATFFLVLCLQLGINEGQDNETIPQPLLFQLNVPSTPDENQEVDMSLTLQTQYKECLVVKAYLISNTPVDGGFNYIQTRCICNDHPTTLYWTFVVTQTLTFRIMVDIVKDKGICPNNVAVVPISGNRYFTDRTVYVN.

Residues methionine 1–glycine 26 form the signal peptide. A Pyrrolidone carboxylic acid modification is found at glutamine 27. A glycan (N-linked (GlcNAc...) asparagine) is linked at asparagine 29. Cystine bridges form between cysteine 65-cysteine 91 and cysteine 89-cysteine 123.

It belongs to the PIP family. Monomer. Interacts with AZGP1.

Its subcellular location is the secreted. The sequence is that of Prolactin-inducible protein homolog (Pip) from Rattus norvegicus (Rat).